Consider the following 473-residue polypeptide: Glutamate--tRNA ligase 2 (473 aa).

Residues 11–21 (PSPTGYLHIGG) carry the 'HIGH' region motif. The span at 113 to 133 (KARAEGRPPRYDGRWRDRDPS) shows a compositional bias: basic and acidic residues. The interval 113–136 (KARAEGRPPRYDGRWRDRDPSEAP) is disordered. The 'KMSKS' region motif lies at 240-244 (KLSKR). K243 is a binding site for ATP.

Belongs to the class-I aminoacyl-tRNA synthetase family. Glutamate--tRNA ligase type 1 subfamily. As to quaternary structure, monomer.

Its subcellular location is the cytoplasm. It carries out the reaction tRNA(Glu) + L-glutamate + ATP = L-glutamyl-tRNA(Glu) + AMP + diphosphate. Catalyzes the attachment of glutamate to tRNA(Glu) in a two-step reaction: glutamate is first activated by ATP to form Glu-AMP and then transferred to the acceptor end of tRNA(Glu). In Brucella abortus (strain S19), this protein is Glutamate--tRNA ligase 2.